Here is a 441-residue protein sequence, read N- to C-terminus: Xylose isomerase (441 aa).

Active-site residues include histidine 99 and aspartate 102. Glutamate 230, glutamate 266, aspartate 294, aspartate 305, aspartate 307, and aspartate 337 together coordinate Mn(2+).

It belongs to the xylose isomerase family. As to quaternary structure, homotetramer. Mn(2+) serves as cofactor.

Its subcellular location is the cytoplasm. The enzyme catalyses alpha-D-xylose = alpha-D-xylulofuranose. The sequence is that of Xylose isomerase (xylA) from Geobacillus stearothermophilus (Bacillus stearothermophilus).